Consider the following 222-residue polypeptide: Leucyl/phenylalanyl-tRNA--protein transferase (222 aa).

This sequence belongs to the L/F-transferase family.

It localises to the cytoplasm. The enzyme catalyses N-terminal L-lysyl-[protein] + L-leucyl-tRNA(Leu) = N-terminal L-leucyl-L-lysyl-[protein] + tRNA(Leu) + H(+). The catalysed reaction is N-terminal L-arginyl-[protein] + L-leucyl-tRNA(Leu) = N-terminal L-leucyl-L-arginyl-[protein] + tRNA(Leu) + H(+). It catalyses the reaction L-phenylalanyl-tRNA(Phe) + an N-terminal L-alpha-aminoacyl-[protein] = an N-terminal L-phenylalanyl-L-alpha-aminoacyl-[protein] + tRNA(Phe). Functionally, functions in the N-end rule pathway of protein degradation where it conjugates Leu, Phe and, less efficiently, Met from aminoacyl-tRNAs to the N-termini of proteins containing an N-terminal arginine or lysine. The chain is Leucyl/phenylalanyl-tRNA--protein transferase from Legionella pneumophila (strain Lens).